A 348-amino-acid polypeptide reads, in one-letter code: Ethanol acetyltransferase 2 (348 aa).

A mitochondrion-targeting transit peptide spans 1 to 19 (MIFNSLSIKRLSSTXTSLP). Residues 49–305 (IIFLHGIYGY…VMKERPQEYI (257 aa)) enclose the AB hydrolase-1 domain. Active-site charge relay system residues include Ser-121, Asp-145, and His-294.

This sequence belongs to the AB hydrolase superfamily.

It localises to the mitochondrion. The catalysed reaction is ethanol + acetyl-CoA = ethyl acetate + CoA. The enzyme catalyses acetyl-CoA + H2O = acetate + CoA + H(+). It carries out the reaction ethyl acetate + H2O = ethanol + acetate + H(+). Its function is as follows. Alcohol acetyltransferase that catalyzes the synthesis of ethyl acetate from ethanol and acetyl-CoA. Can also function as a thioesterase by hydrolyzing acetyl-CoA in the absence of ethanol, as well as esterase hydrolyzing ethyl acetate. The protein is Ethanol acetyltransferase 2 (EAT2) of Hanseniaspora uvarum (Yeast).